Consider the following 417-residue polypeptide: MFSRDVRLETYDPELAKAIAAEAGRQEDHVELIASENYCSQLVMEAQGSQLTNKYAEGYPGKRYYGGCAFVDIAEQLAIDRIKQVFDADYANVQPHSGSQANQAVYLALLQPGDTILGMSLAHGGHLTHGAKANVSGKLFNAVQYGVNEQGLIDYDEVQRLATEHTPKMVVAGFSAYSQKIDWARFRAIADSVGAYLFVDMAHIAGLVAAGVYPSPMEHAHVVTSTTHKTLRGPRGGIIVAKGASEELQKKLQSIVFPGIQGGPLMHVIAAKAVAFKEALEPAFKTYQQQVVKNAQAMANTLIARGYKIVSGGTENHLMLVDMIGRDVSGKDAEAALGKAHITVNKNAVPNDPRSPFVTSGLRLGTPAITTRGYKEPDSIDLANWIADVLDAPTDEAVLAKVRDAVTAQCKRYPVYG.

(6S)-5,6,7,8-tetrahydrofolate is bound by residues Leu-121 and 125-127 (GHL). Lys-229 is subject to N6-(pyridoxal phosphate)lysine. (6S)-5,6,7,8-tetrahydrofolate is bound at residue 355-357 (SPF).

The protein belongs to the SHMT family. As to quaternary structure, homodimer. Requires pyridoxal 5'-phosphate as cofactor.

It localises to the cytoplasm. The catalysed reaction is (6R)-5,10-methylene-5,6,7,8-tetrahydrofolate + glycine + H2O = (6S)-5,6,7,8-tetrahydrofolate + L-serine. The protein operates within one-carbon metabolism; tetrahydrofolate interconversion. It functions in the pathway amino-acid biosynthesis; glycine biosynthesis; glycine from L-serine: step 1/1. Catalyzes the reversible interconversion of serine and glycine with tetrahydrofolate (THF) serving as the one-carbon carrier. This reaction serves as the major source of one-carbon groups required for the biosynthesis of purines, thymidylate, methionine, and other important biomolecules. Also exhibits THF-independent aldolase activity toward beta-hydroxyamino acids, producing glycine and aldehydes, via a retro-aldol mechanism. In Xanthomonas oryzae pv. oryzae (strain MAFF 311018), this protein is Serine hydroxymethyltransferase.